Here is a 416-residue protein sequence, read N- to C-terminus: 4-hydroxy-3-methylbut-2-en-1-yl diphosphate synthase (flavodoxin) (416 aa).

[4Fe-4S] cluster is bound by residues Cys304, Cys307, Cys350, and Glu357.

The protein belongs to the IspG family. [4Fe-4S] cluster serves as cofactor.

The enzyme catalyses (2E)-4-hydroxy-3-methylbut-2-enyl diphosphate + oxidized [flavodoxin] + H2O + 2 H(+) = 2-C-methyl-D-erythritol 2,4-cyclic diphosphate + reduced [flavodoxin]. It functions in the pathway isoprenoid biosynthesis; isopentenyl diphosphate biosynthesis via DXP pathway; isopentenyl diphosphate from 1-deoxy-D-xylulose 5-phosphate: step 5/6. Functionally, converts 2C-methyl-D-erythritol 2,4-cyclodiphosphate (ME-2,4cPP) into 1-hydroxy-2-methyl-2-(E)-butenyl 4-diphosphate. This chain is 4-hydroxy-3-methylbut-2-en-1-yl diphosphate synthase (flavodoxin), found in Rhizobium johnstonii (strain DSM 114642 / LMG 32736 / 3841) (Rhizobium leguminosarum bv. viciae).